The chain runs to 333 residues: Holliday junction branch migration complex subunit RuvB (333 aa).

The interval 4 to 185 (IDRLVSTDVL…FGIVQRLEFY (182 aa)) is large ATPase domain (RuvB-L). ATP-binding positions include Ile-24, Arg-25, Gly-66, Lys-69, Thr-70, Thr-71, 132–134 (EDY), Arg-175, Tyr-185, and Arg-222. Thr-70 lines the Mg(2+) pocket. A small ATPAse domain (RuvB-S) region spans residues 186 to 256 (SVPDLEHIVS…IAIKALEMLN (71 aa)). A head domain (RuvB-H) region spans residues 259-333 (KEGLDYMDSK…HAYQHFICGG (75 aa)). Residues Arg-295, Arg-314, and Arg-319 each coordinate DNA.

Belongs to the RuvB family. In terms of assembly, homohexamer. Forms an RuvA(8)-RuvB(12)-Holliday junction (HJ) complex. HJ DNA is sandwiched between 2 RuvA tetramers; dsDNA enters through RuvA and exits via RuvB. An RuvB hexamer assembles on each DNA strand where it exits the tetramer. Each RuvB hexamer is contacted by two RuvA subunits (via domain III) on 2 adjacent RuvB subunits; this complex drives branch migration. In the full resolvosome a probable DNA-RuvA(4)-RuvB(12)-RuvC(2) complex forms which resolves the HJ.

It localises to the cytoplasm. It catalyses the reaction ATP + H2O = ADP + phosphate + H(+). Its function is as follows. The RuvA-RuvB-RuvC complex processes Holliday junction (HJ) DNA during genetic recombination and DNA repair, while the RuvA-RuvB complex plays an important role in the rescue of blocked DNA replication forks via replication fork reversal (RFR). RuvA specifically binds to HJ cruciform DNA, conferring on it an open structure. The RuvB hexamer acts as an ATP-dependent pump, pulling dsDNA into and through the RuvAB complex. RuvB forms 2 homohexamers on either side of HJ DNA bound by 1 or 2 RuvA tetramers; 4 subunits per hexamer contact DNA at a time. Coordinated motions by a converter formed by DNA-disengaged RuvB subunits stimulates ATP hydrolysis and nucleotide exchange. Immobilization of the converter enables RuvB to convert the ATP-contained energy into a lever motion, pulling 2 nucleotides of DNA out of the RuvA tetramer per ATP hydrolyzed, thus driving DNA branch migration. The RuvB motors rotate together with the DNA substrate, which together with the progressing nucleotide cycle form the mechanistic basis for DNA recombination by continuous HJ branch migration. Branch migration allows RuvC to scan DNA until it finds its consensus sequence, where it cleaves and resolves cruciform DNA. In Hamiltonella defensa subsp. Acyrthosiphon pisum (strain 5AT), this protein is Holliday junction branch migration complex subunit RuvB.